Reading from the N-terminus, the 455-residue chain is Eukaryotic translation initiation factor 3 subunit E (455 aa).

In terms of domain architecture, PCI spans 256-425 (TDLFFSPAYI…GTVIMNHPPQ (170 aa)).

It belongs to the eIF-3 subunit E family. As to quaternary structure, component of the eukaryotic translation initiation factor 3 (eIF-3) complex.

The protein resides in the cytoplasm. Component of the eukaryotic translation initiation factor 3 (eIF-3) complex, which is involved in protein synthesis of a specialized repertoire of mRNAs and, together with other initiation factors, stimulates binding of mRNA and methionyl-tRNAi to the 40S ribosome. The eIF-3 complex specifically targets and initiates translation of a subset of mRNAs involved in cell proliferation. In Neosartorya fischeri (strain ATCC 1020 / DSM 3700 / CBS 544.65 / FGSC A1164 / JCM 1740 / NRRL 181 / WB 181) (Aspergillus fischerianus), this protein is Eukaryotic translation initiation factor 3 subunit E (int6).